Here is a 168-residue protein sequence, read N- to C-terminus: Ribosome rescue factor SmrB (168 aa).

The Smr domain maps to 92–167 (LDLHGLTKEQ…GDAAILILFE (76 aa)).

Belongs to the SmrB family. As to quaternary structure, associates with collided ribosomes, but not with correctly translating polysomes.

Functionally, acts as a ribosome collision sensor. Detects stalled/collided disomes (pairs of ribosomes where the leading ribosome is stalled and a second ribosome has collided with it) and endonucleolytically cleaves mRNA at the 5' boundary of the stalled ribosome. Stalled/collided disomes form a new interface (primarily via the 30S subunits) that binds SmrB. Cleaved mRNA becomes available for tmRNA ligation, leading to ribosomal subunit dissociation and rescue of stalled ribosomes. This is Ribosome rescue factor SmrB from Pasteurella multocida (strain Pm70).